The chain runs to 38 residues: Mu/omega-theraphotoxin-Mb1b (38 aa).

Cystine bridges form between cysteine 7-cysteine 21, cysteine 14-cysteine 26, and cysteine 20-cysteine 33. At serine 38 the chain carries Serine amide.

Belongs to the neurotoxin 10 (Hwtx-1) family. 28 (Jztx-11) subfamily. Expressed by the venom gland.

It is found in the secreted. Paralytic toxin on insects that inhibits voltage-gated sodium (Nav) and calcium (Cav) channels in P.americana (American cockroach) dorsal unpaired median (DUM) neurons, and also inhibits the B.germanica (German cockroach) Nav channel (BgNaV1). May act as a gating-modifier toxin on Nav and as a pore blocker on Cav. In vivo, reversibly paralyzes both L.cuprina (Australian sheep blowfly) and M.domestica (housefly), but does not affect larvae of H.armigera (cotton bollworms). This is Mu/omega-theraphotoxin-Mb1b from Monocentropus balfouri (Socotra Island blue baboon tarantula).